The chain runs to 1355 residues: Phosphoribosylformylglycinamidine synthase (1355 aa).

ATP-binding positions include 326–337 (GAETGTGGRLRD) and 406–408 (IGF). Mg(2+)-binding residues include glutamate 743, asparagine 747, and aspartate 911. ATP is bound at residue serine 913. The Glutamine amidotransferase type-1 domain maps to 1087-1325 (KVAVIREEGS…LSWQWPFMPE (239 aa)). The active-site Nucleophile is cysteine 1182. Residues histidine 1310 and glutamate 1312 contribute to the active site.

The protein in the N-terminal section; belongs to the FGAMS family.

The protein resides in the cytoplasm. The enzyme catalyses N(2)-formyl-N(1)-(5-phospho-beta-D-ribosyl)glycinamide + L-glutamine + ATP + H2O = 2-formamido-N(1)-(5-O-phospho-beta-D-ribosyl)acetamidine + L-glutamate + ADP + phosphate + H(+). Its pathway is purine metabolism; IMP biosynthesis via de novo pathway; 5-amino-1-(5-phospho-D-ribosyl)imidazole from N(2)-formyl-N(1)-(5-phospho-D-ribosyl)glycinamide: step 1/2. Phosphoribosylformylglycinamidine synthase involved in the purines biosynthetic pathway. Catalyzes the ATP-dependent conversion of formylglycinamide ribonucleotide (FGAR) and glutamine to yield formylglycinamidine ribonucleotide (FGAM) and glutamate. This Dictyostelium discoideum (Social amoeba) protein is Phosphoribosylformylglycinamidine synthase (purL).